The sequence spans 467 residues: Matrix metalloproteinase-18 (467 aa).

Residues 1-17 form the signal peptide; it reads MNSLLLKLLLCVAITAA. Residues 18–99 constitute a propeptide that is removed on maturation; the sequence is FPADKQDEPP…PRCGVYDVGQ (82 aa). A Cysteine switch motif is present at residues 90 to 97; it reads PRCGVYDV. Zn(2+)-binding residues include Cys92 and His218. Glu219 is an active-site residue. 2 residues coordinate Zn(2+): His222 and His228. Hemopexin repeat units follow at residues 277 to 326, 327 to 373, 375 to 423, and 424 to 467; these read PSRC…WPSL, PTNI…GFPK, VKRI…FPGI, and PDKI…WLGC. Cys280 and Cys467 are joined by a disulfide.

The protein belongs to the peptidase M10A family. Zn(2+) is required as a cofactor. The cofactor is Ca(2+). Expressed only transiently in whole animal, at time when tadpole feeding begins.

Its subcellular location is the secreted. The protein localises to the extracellular space. It is found in the extracellular matrix. Its activity is regulated as follows. Up-regulated in the tail by thyroid hormone. Cleaves collagen type I. May play a role in larval tissue degeneration and adult organogenesis during amphibian metamorphosis. May be involved in tail resorption. This is Matrix metalloproteinase-18 (mmp18) from Xenopus laevis (African clawed frog).